The primary structure comprises 332 residues: MTRARMYYDEDADLSVLDNKTIAIVGYGSQGHAHALNLKDSGIDVIVGLYEGSRSWARAENEGLAVYPTAEAAAKADLVMILLPDEVQREIYNRDIAPHLGTGKTLAFAHGFNIHFSQIVPSQEVDVLMVAPKGPGHLVRRVFTEGKGVPCLFAVEQDASGRARATAMAYARAIGGTRAGILETTFREEAETDLFGEQTVLCGGLTALIKAGFETLVEAGYQPELAYFECLHEVKLIVDLIVEGGLAKMRDSISNTAEFGDYTRGPRIVDERTKAEMKKILAEIQNGEFAKQWVLDSQANYASFKAMRRREAEHPIEEVGADLRKMMSWLRP.

Residues 4–184 (ARMYYDEDAD…GGTRAGILET (181 aa)) enclose the KARI N-terminal Rossmann domain. NADP(+) is bound by residues 27–30 (YGSQ), Ser-53, Ser-55, and 85–88 (DEVQ). The active site involves His-110. Residue Gly-136 coordinates NADP(+). The 146-residue stretch at 185-330 (TFREEAETDL…ADLRKMMSWL (146 aa)) folds into the KARI C-terminal knotted domain. Residues Asp-193, Glu-197, Glu-229, and Glu-233 each contribute to the Mg(2+) site. Residue Ser-254 coordinates substrate.

It belongs to the ketol-acid reductoisomerase family. Mg(2+) is required as a cofactor.

It carries out the reaction (2R)-2,3-dihydroxy-3-methylbutanoate + NADP(+) = (2S)-2-acetolactate + NADPH + H(+). It catalyses the reaction (2R,3R)-2,3-dihydroxy-3-methylpentanoate + NADP(+) = (S)-2-ethyl-2-hydroxy-3-oxobutanoate + NADPH + H(+). It functions in the pathway amino-acid biosynthesis; L-isoleucine biosynthesis; L-isoleucine from 2-oxobutanoate: step 2/4. It participates in amino-acid biosynthesis; L-valine biosynthesis; L-valine from pyruvate: step 2/4. In terms of biological role, involved in the biosynthesis of branched-chain amino acids (BCAA). Catalyzes an alkyl-migration followed by a ketol-acid reduction of (S)-2-acetolactate (S2AL) to yield (R)-2,3-dihydroxy-isovalerate. In the isomerase reaction, S2AL is rearranged via a Mg-dependent methyl migration to produce 3-hydroxy-3-methyl-2-ketobutyrate (HMKB). In the reductase reaction, this 2-ketoacid undergoes a metal-dependent reduction by NADPH to yield (R)-2,3-dihydroxy-isovalerate. This chain is Ketol-acid reductoisomerase (NADP(+)), found in Gloeobacter violaceus (strain ATCC 29082 / PCC 7421).